A 120-amino-acid chain; its full sequence is Small ribosomal subunit protein bS16 (120 aa).

The interval 84–120 (KRESRNNPQQGQPKKKAQERAAAAAAAAEKAASEAAA) is disordered. Positions 103-120 (RAAAAAAAAEKAASEAAA) are enriched in low complexity.

It belongs to the bacterial ribosomal protein bS16 family.

In Beijerinckia indica subsp. indica (strain ATCC 9039 / DSM 1715 / NCIMB 8712), this protein is Small ribosomal subunit protein bS16.